Consider the following 919-residue polypeptide: Translation initiation factor IF-2 (919 aa).

Over residues 93-107 the composition is skewed to basic and acidic residues; that stretch reads MGKALPEEVPEKIAP. Disordered stretches follow at residues 93 to 145 and 158 to 279; these read MGKA…PAEP and KIQP…RKGE. The span at 136–145 shows a compositional bias: pro residues; that stretch reads LAPPEKPAEP. The span at 158 to 171 shows a compositional bias: basic and acidic residues; that stretch reads KIQPPEKFAEEPLK. Low complexity predominate over residues 172 to 193; sequence KPAVIEPEKAAAAPKAVPGEAK. 2 stretches are compositionally biased toward basic and acidic residues: residues 194-203 and 256-279; these read PLPRTERVQE and GAPK…RKGE. One can recognise a tr-type G domain in the interval 420-589; that stretch reads PRAPVVTIMG…LLQADVLELK (170 aa). The segment at 429-436 is G1; it reads GHVDHGKT. Residue 429–436 coordinates GTP; the sequence is GHVDHGKT. Positions 454–458 are G2; sequence GITQA. The G3 stretch occupies residues 475–478; it reads DTPG. GTP-binding positions include 475 to 479 and 529 to 532; these read DTPGH and NKID. The interval 529–532 is G4; sequence NKID. A G5 region spans residues 565-567; sequence SAK.

Belongs to the TRAFAC class translation factor GTPase superfamily. Classic translation factor GTPase family. IF-2 subfamily.

It is found in the cytoplasm. One of the essential components for the initiation of protein synthesis. Protects formylmethionyl-tRNA from spontaneous hydrolysis and promotes its binding to the 30S ribosomal subunits. Also involved in the hydrolysis of GTP during the formation of the 70S ribosomal complex. This is Translation initiation factor IF-2 from Syntrophus aciditrophicus (strain SB).